The following is a 436-amino-acid chain: Protein FAM83A (436 aa).

The tract at residues 1–298 is DUF1669; it reads MSRSRHVGKI…LYASSKPLMG (298 aa). A disordered region spans residues 73-95; that stretch reads AQAKEPPDAPDSAGGAESGPRGL. Ser301, Ser329, Ser350, and Ser359 each carry phosphoserine. The interval 302-371 is disordered; that stretch reads PRLVAPFQPN…APIPPTVPRL (70 aa). A compositionally biased stretch (polar residues) spans 321–349; it reads LSGTSDSASDRTSSNPFSSLSTGSNAHNQ. Positions 350–359 are enriched in low complexity; it reads SLSTSSGPSS.

The protein belongs to the FAM83 family. Directly interacts (via DUF1669) with casein kinase isoforms CSNK1A1, CSNK1A1L, CSNK1D and CSNK1E. May be phosphorylated upon EGFR activation. Widely expressed, with relatively higher expression levels in adipose tissues, especially in epididymal and inguinal white adipose tissue (at protein level).

Its subcellular location is the cytoplasm. The protein localises to the mitochondrion. Functionally, involved in mitochondrial maintenance during adipogenesis. May be acting by playing a role in the maintenance of normal mitochondrial function. The sequence is that of Protein FAM83A from Mus musculus (Mouse).